A 433-amino-acid polypeptide reads, in one-letter code: MPQFLDSRQPDFETAFTALLGAKREDSPDVDAVVAGIIADVRARGDAAVIELTERFDRVALTPQSLRFSTEEIAQAVDEVPAPERAALELAAARIRAYHERQMPQDADWTDDTGARLGWRWSAVSAAGLYVPGGLASYPSSVLMNAIPAKVAGVGRLAIAVPTPDGQVNPLVLLAAQISGVDEVYRIGGAQAIAALAYGTDTIAPVDKITGPGNAFVAAAKRRVFGKVGIDMIAGPSEILVIADRDNDPDWIALDLLSQAEHDESAQSILITDDAAFGRAVAEAVDKRLETLERRAIAGVSWRDFGAVITVSDLDEAAALSNRIAPEHLELCVSDPEALAARTIHAGAIFLGQYTPEAIGDYVGGPNHVLPTARSARFSSGLSVMDFLKRTTMSRMTPEALRAIGPAAAQLARSESLEAHGLSVQARLDRLNG.

NAD(+) is bound by residues Y130, Q191, and N214. Residues S237, Q259, and H262 each contribute to the substrate site. Residues Q259 and H262 each contribute to the Zn(2+) site. Active-site proton acceptor residues include E327 and H328. Residues H328, D361, E415, and H420 each contribute to the substrate site. Position 361 (D361) interacts with Zn(2+). Residue H420 coordinates Zn(2+).

It belongs to the histidinol dehydrogenase family. Zn(2+) is required as a cofactor.

The enzyme catalyses L-histidinol + 2 NAD(+) + H2O = L-histidine + 2 NADH + 3 H(+). Its pathway is amino-acid biosynthesis; L-histidine biosynthesis; L-histidine from 5-phospho-alpha-D-ribose 1-diphosphate: step 9/9. Catalyzes the sequential NAD-dependent oxidations of L-histidinol to L-histidinaldehyde and then to L-histidine. The protein is Histidinol dehydrogenase of Ruegeria pomeroyi (strain ATCC 700808 / DSM 15171 / DSS-3) (Silicibacter pomeroyi).